The primary structure comprises 490 residues: Betaine aldehyde dehydrogenase (490 aa).

K(+)-binding residues include Ile27 and Asp93. 150–152 (GAW) provides a ligand contact to NAD(+). The active-site Charge relay system is the Lys162. 176 to 179 (KPSE) contacts NAD(+). Val180 contacts K(+). 230–233 (GTTT) lines the NAD(+) pocket. Residue Leu246 coordinates K(+). Residue Glu252 is the Proton acceptor of the active site. NAD(+) is bound by residues Gly254, Cys286, and Glu387. Cys286 (nucleophile) is an active-site residue. Cys286 is modified (cysteine sulfenic acid (-SOH)). The K(+) site is built by Lys457 and Gly460. The active-site Charge relay system is Glu464.

This sequence belongs to the aldehyde dehydrogenase family. In terms of assembly, dimer of dimers. It depends on K(+) as a cofactor.

The catalysed reaction is betaine aldehyde + NAD(+) + H2O = glycine betaine + NADH + 2 H(+). It participates in amine and polyamine biosynthesis; betaine biosynthesis via choline pathway; betaine from betaine aldehyde: step 1/1. Its function is as follows. Involved in the biosynthesis of the osmoprotectant glycine betaine. Catalyzes the irreversible oxidation of betaine aldehyde to the corresponding acid. This Pseudomonas putida (strain W619) protein is Betaine aldehyde dehydrogenase.